We begin with the raw amino-acid sequence, 361 residues long: Peptide chain release factor 1 (361 aa).

Glutamine 237 bears the N5-methylglutamine mark.

Belongs to the prokaryotic/mitochondrial release factor family. Post-translationally, methylated by PrmC. Methylation increases the termination efficiency of RF1.

It localises to the cytoplasm. Peptide chain release factor 1 directs the termination of translation in response to the peptide chain termination codons UAG and UAA. The polypeptide is Peptide chain release factor 1 (Chromohalobacter salexigens (strain ATCC BAA-138 / DSM 3043 / CIP 106854 / NCIMB 13768 / 1H11)).